The following is a 312-amino-acid chain: Speedy protein A (312 aa).

Residues 67-199 form a speedy/Ringo box; Required for CDK-binding region; sequence RQEMTAFFKL…SHYIWQRERS (133 aa). Ser-221 carries the post-translational modification Phosphoserine. The residue at position 223 (Thr-223) is a Phosphothreonine.

It belongs to the Speedy/Ringo family. In terms of assembly, interacts with CDK1. Interacts with CDK2. May interact with CDKN1B/KIP1. Identified in a complex with CDK2 and CDKN1B/KIP1, where it interacts primarily with CDK2.

The protein localises to the nucleus. Functionally, regulates the G1/S phase transition of the cell cycle by binding and activating CDK1 and CDK2. Contributes to CDK2 activation without promoting CDK2 phosphorylation, by inducing a conformation change of the CDK2 T-loop that obstructs the substrate-binding cleft prior to kinase activation. Interferes with CDKN1B-mediated inhibition of CDK2. Mediates cell survival during the DNA damage process through activation of CDK2. This is Speedy protein A from Rattus norvegicus (Rat).